We begin with the raw amino-acid sequence, 297 residues long: 2-phospho-L-lactate transferase (297 aa).

Residue Asp49 coordinates 7,8-didemethyl-8-hydroxy-5-deazariboflavin.

Belongs to the CofD family. Homodimer. Mg(2+) serves as cofactor.

The enzyme catalyses (2S)-lactyl-2-diphospho-5'-guanosine + 7,8-didemethyl-8-hydroxy-5-deazariboflavin = oxidized coenzyme F420-0 + GMP + H(+). The protein operates within cofactor biosynthesis; coenzyme F420 biosynthesis. Its function is as follows. Catalyzes the transfer of the 2-phospholactate moiety from (2S)-lactyl-2-diphospho-5'-guanosine to 7,8-didemethyl-8-hydroxy-5-deazariboflavin (FO) with the formation of oxidized coenzyme F420-0 and GMP. This Methanospirillum hungatei JF-1 (strain ATCC 27890 / DSM 864 / NBRC 100397 / JF-1) protein is 2-phospho-L-lactate transferase.